The following is a 65-amino-acid chain: Large ribosomal subunit protein bL35 (65 aa).

The protein belongs to the bacterial ribosomal protein bL35 family.

The protein is Large ribosomal subunit protein bL35 of Aeromonas salmonicida (strain A449).